A 93-amino-acid chain; its full sequence is Small ribosomal subunit protein bS20 (93 aa).

The protein belongs to the bacterial ribosomal protein bS20 family.

Its function is as follows. Binds directly to 16S ribosomal RNA. In Dictyoglomus thermophilum (strain ATCC 35947 / DSM 3960 / H-6-12), this protein is Small ribosomal subunit protein bS20.